The following is a 672-amino-acid chain: UvrABC system protein B (672 aa).

One can recognise a Helicase ATP-binding domain in the interval 26–181 (AGLEDGLAYQ…ILQRLAELQY (156 aa)). 39 to 46 (GVTGSGKT) provides a ligand contact to ATP. A Beta-hairpin motif is present at residues 92 to 115 (YYDYYQPEAYVPSSDTYIEKDASI). The Helicase C-terminal domain occupies 430 to 592 (QVDDLLSEIK…ITPKSIQKAV (163 aa)). The UVR domain maps to 631-666 (AKELRKLEEQMYHHARNLEFEEAAAVRDKIQHIRKG).

This sequence belongs to the UvrB family. As to quaternary structure, forms a heterotetramer with UvrA during the search for lesions. Interacts with UvrC in an incision complex.

It is found in the cytoplasm. In terms of biological role, the UvrABC repair system catalyzes the recognition and processing of DNA lesions. A damage recognition complex composed of 2 UvrA and 2 UvrB subunits scans DNA for abnormalities. Upon binding of the UvrA(2)B(2) complex to a putative damaged site, the DNA wraps around one UvrB monomer. DNA wrap is dependent on ATP binding by UvrB and probably causes local melting of the DNA helix, facilitating insertion of UvrB beta-hairpin between the DNA strands. Then UvrB probes one DNA strand for the presence of a lesion. If a lesion is found the UvrA subunits dissociate and the UvrB-DNA preincision complex is formed. This complex is subsequently bound by UvrC and the second UvrB is released. If no lesion is found, the DNA wraps around the other UvrB subunit that will check the other stand for damage. The polypeptide is UvrABC system protein B (Coxiella burnetii (strain CbuK_Q154) (Coxiella burnetii (strain Q154))).